The chain runs to 185 residues: Riboflavin kinase (185 aa).

2 residues coordinate Mg(2+): Thr-41 and Asn-43. Glu-122 serves as the catalytic Nucleophile.

Belongs to the flavokinase family. Zn(2+) is required as a cofactor. Mg(2+) serves as cofactor.

The catalysed reaction is riboflavin + ATP = FMN + ADP + H(+). It functions in the pathway cofactor biosynthesis; FMN biosynthesis; FMN from riboflavin (ATP route): step 1/1. Its function is as follows. Catalyzes the phosphorylation of riboflavin (vitamin B2) to form flavin mononucleotide (FMN) coenzyme. The chain is Riboflavin kinase (FMN1) from Kluyveromyces lactis (strain ATCC 8585 / CBS 2359 / DSM 70799 / NBRC 1267 / NRRL Y-1140 / WM37) (Yeast).